We begin with the raw amino-acid sequence, 318 residues long: Glutathione synthetase (318 aa).

The ATP-grasp domain maps to 124–310 (EKLFTAWFPE…ITGKLMDAIE (187 aa)). 150–207 (FREQHGDVILKPLDGMGGASIFRVKEGDPNLSVIIETLTNHGQNYCMAQTFVPDISNG) contacts ATP. 2 residues coordinate Mg(2+): Glu-281 and Asn-283.

This sequence belongs to the prokaryotic GSH synthase family. Mg(2+) serves as cofactor. Mn(2+) is required as a cofactor.

The enzyme catalyses gamma-L-glutamyl-L-cysteine + glycine + ATP = glutathione + ADP + phosphate + H(+). It functions in the pathway sulfur metabolism; glutathione biosynthesis; glutathione from L-cysteine and L-glutamate: step 2/2. In Vibrio cholerae serotype O1 (strain ATCC 39315 / El Tor Inaba N16961), this protein is Glutathione synthetase.